The sequence spans 278 residues: Formamidopyrimidine-DNA glycosylase (278 aa).

P2 functions as the Schiff-base intermediate with DNA in the catalytic mechanism. The active-site Proton donor is the E3. The Proton donor; for beta-elimination activity role is filled by K58. 3 residues coordinate DNA: H91, R109, and R158. The FPG-type zinc-finger motif lies at 243–277; it reads KVYDRKGLPCKVCKTPISQMVQGQRTTYFCSQCQK. Residue R267 is the Proton donor; for delta-elimination activity of the active site.

Belongs to the FPG family. In terms of assembly, monomer. The cofactor is Zn(2+).

It carries out the reaction Hydrolysis of DNA containing ring-opened 7-methylguanine residues, releasing 2,6-diamino-4-hydroxy-5-(N-methyl)formamidopyrimidine.. The catalysed reaction is 2'-deoxyribonucleotide-(2'-deoxyribose 5'-phosphate)-2'-deoxyribonucleotide-DNA = a 3'-end 2'-deoxyribonucleotide-(2,3-dehydro-2,3-deoxyribose 5'-phosphate)-DNA + a 5'-end 5'-phospho-2'-deoxyribonucleoside-DNA + H(+). Involved in base excision repair of DNA damaged by oxidation or by mutagenic agents. Acts as a DNA glycosylase that recognizes and removes damaged bases. Has a preference for oxidized purines, such as 7,8-dihydro-8-oxoguanine (8-oxoG). Has AP (apurinic/apyrimidinic) lyase activity and introduces nicks in the DNA strand. Cleaves the DNA backbone by beta-delta elimination to generate a single-strand break at the site of the removed base with both 3'- and 5'-phosphates. This chain is Formamidopyrimidine-DNA glycosylase, found in Polynucleobacter necessarius subsp. necessarius (strain STIR1).